Here is a 336-residue protein sequence, read N- to C-terminus: Holliday junction branch migration complex subunit RuvB (336 aa).

The tract at residues 4-184 (ADRLISAGAT…FGIVQRLEFY (181 aa)) is large ATPase domain (RuvB-L). ATP-binding positions include I23, R24, G65, K68, T69, T70, 131-133 (EDY), R174, Y184, and R221. Mg(2+) is bound at residue T69. The tract at residues 185-255 (QVPDLQHIVG…IAAQALDMLN (71 aa)) is small ATPAse domain (RuvB-S). The segment at 258–336 (AEGFDYMDRK…HFGITPPEMP (79 aa)) is head domain (RuvB-H). DNA-binding residues include R294, R313, and R318.

It belongs to the RuvB family. Homohexamer. Forms an RuvA(8)-RuvB(12)-Holliday junction (HJ) complex. HJ DNA is sandwiched between 2 RuvA tetramers; dsDNA enters through RuvA and exits via RuvB. An RuvB hexamer assembles on each DNA strand where it exits the tetramer. Each RuvB hexamer is contacted by two RuvA subunits (via domain III) on 2 adjacent RuvB subunits; this complex drives branch migration. In the full resolvosome a probable DNA-RuvA(4)-RuvB(12)-RuvC(2) complex forms which resolves the HJ.

The protein resides in the cytoplasm. It catalyses the reaction ATP + H2O = ADP + phosphate + H(+). Functionally, the RuvA-RuvB-RuvC complex processes Holliday junction (HJ) DNA during genetic recombination and DNA repair, while the RuvA-RuvB complex plays an important role in the rescue of blocked DNA replication forks via replication fork reversal (RFR). RuvA specifically binds to HJ cruciform DNA, conferring on it an open structure. The RuvB hexamer acts as an ATP-dependent pump, pulling dsDNA into and through the RuvAB complex. RuvB forms 2 homohexamers on either side of HJ DNA bound by 1 or 2 RuvA tetramers; 4 subunits per hexamer contact DNA at a time. Coordinated motions by a converter formed by DNA-disengaged RuvB subunits stimulates ATP hydrolysis and nucleotide exchange. Immobilization of the converter enables RuvB to convert the ATP-contained energy into a lever motion, pulling 2 nucleotides of DNA out of the RuvA tetramer per ATP hydrolyzed, thus driving DNA branch migration. The RuvB motors rotate together with the DNA substrate, which together with the progressing nucleotide cycle form the mechanistic basis for DNA recombination by continuous HJ branch migration. Branch migration allows RuvC to scan DNA until it finds its consensus sequence, where it cleaves and resolves cruciform DNA. This is Holliday junction branch migration complex subunit RuvB from Salmonella choleraesuis (strain SC-B67).